An 852-amino-acid chain; its full sequence is Serine/threonine-protein kinase pakB (852 aa).

The tract at residues Met1–Lys334 is disordered. Ser8 carries the phosphoserine; by autocatalysis modification. A compositionally biased stretch (pro residues) spans Ser24–Asn35. Residues Ser44–Pro56 are compositionally biased toward low complexity. Positions Ser57–Ser74 are enriched in pro residues. Composition is skewed to low complexity over residues Arg90–Gly117 and Phe124–Asn163. The segment covering Thr181–Ser191 has biased composition (pro residues). The span at Ala201 to Ile210 shows a compositional bias: polar residues. Low complexity-rich tracts occupy residues Ser246–Ile270 and Ser293–Ser317. A CRIB domain is found at Val356–Asn369. Positions Ala419–Gln433 are enriched in low complexity. Residues Ala419 to Gln526 are disordered. A compositionally biased stretch (basic residues) spans Pro470–Gln485. Residues Gln486–Gln514 show a composition bias toward low complexity. In terms of domain architecture, Protein kinase spans Gly570–Leu823. Residues Ile576 to Val584 and Lys599 each bind ATP. Asp691 serves as the catalytic Proton acceptor.

Belongs to the protein kinase superfamily. STE Ser/Thr protein kinase family. STE20 subfamily. In terms of assembly, interacts with rac1A, rac1B, rac1C, racA, racB, racC and racF1. It depends on Mg(2+) as a cofactor. Autophosphorylated at Ser-8. This may stimulate interaction with GTP-bound Rac family members which then further stimulates autophosphorylation and kinase activity.

The protein localises to the membrane. The protein resides in the cytoplasm. It is found in the cytoskeleton. The enzyme catalyses L-seryl-[protein] + ATP = O-phospho-L-seryl-[protein] + ADP + H(+). It catalyses the reaction L-threonyl-[protein] + ATP = O-phospho-L-threonyl-[protein] + ADP + H(+). Regulator of the myosin I component of the cytoskeleton: required for regulation of cytokinesis, phagocytosis and pinocytosis. The polypeptide is Serine/threonine-protein kinase pakB (Dictyostelium discoideum (Social amoeba)).